The chain runs to 130 residues: Small ribosomal subunit protein uS8 (130 aa).

Belongs to the universal ribosomal protein uS8 family. As to quaternary structure, part of the 30S ribosomal subunit. Contacts proteins S5 and S12.

Its function is as follows. One of the primary rRNA binding proteins, it binds directly to 16S rRNA central domain where it helps coordinate assembly of the platform of the 30S subunit. This Glaesserella parasuis serovar 5 (strain SH0165) (Haemophilus parasuis) protein is Small ribosomal subunit protein uS8.